Consider the following 870-residue polypeptide: Leucine--tRNA ligase (870 aa).

A 'HIGH' region motif is present at residues 55–65; that stretch reads PYPSGTLHMGH. The short motif at 626-630 is the 'KMSKS' region element; that stretch reads KMSKS. Lysine 629 is an ATP binding site.

It belongs to the class-I aminoacyl-tRNA synthetase family.

It localises to the cytoplasm. The catalysed reaction is tRNA(Leu) + L-leucine + ATP = L-leucyl-tRNA(Leu) + AMP + diphosphate. This is Leucine--tRNA ligase from Prochlorococcus marinus (strain SARG / CCMP1375 / SS120).